We begin with the raw amino-acid sequence, 139 residues long: uncharacterized protein (139 aa).

The next 3 membrane-spanning stretches (helical) occupy residues 38-60 (YFLH…LYVF), 72-94 (FIIL…CAGS), and 114-136 (ITVV…LIVA).

Its subcellular location is the cell membrane. This is an uncharacterized protein from Treponema pallidum (strain Nichols).